Consider the following 347-residue polypeptide: NADH-ubiquinone oxidoreductase chain 2 (347 aa).

The next 10 membrane-spanning stretches (helical) occupy residues 26-46, 60-80, 96-116, 123-143, 151-171, 178-198, 200-220, 240-260, 274-294, and 325-345; these read WLLA…ILTM, FLTQ…NFML, SMAL…FWVP, SLTS…SILY, ITIL…GGLN, ILAY…PYNP, LTIL…MIMM, MMIL…LSGF, DSII…YFYM, and LLPP…FLSI.

Belongs to the complex I subunit 2 family. Core subunit of respiratory chain NADH dehydrogenase (Complex I) which is composed of 45 different subunits. Interacts with TMEM242.

It is found in the mitochondrion inner membrane. It carries out the reaction a ubiquinone + NADH + 5 H(+)(in) = a ubiquinol + NAD(+) + 4 H(+)(out). In terms of biological role, core subunit of the mitochondrial membrane respiratory chain NADH dehydrogenase (Complex I) which catalyzes electron transfer from NADH through the respiratory chain, using ubiquinone as an electron acceptor. Essential for the catalytic activity and assembly of complex I. This is NADH-ubiquinone oxidoreductase chain 2 from Dugong dugon (Dugong).